The sequence spans 434 residues: 4-hydroxyphenylpyruvate dioxygenase (434 aa).

Residues 1 to 21 form a disordered region; that stretch reads MPPTPTTPAATGAAAAVTPEH. Residues 7 to 19 are compositionally biased toward low complexity; the sequence is TPAATGAAAAVTP. VOC domains follow at residues 41-192 and 208-368; these read SFHH…FLPG and RFDH…IFTK. Fe cation-binding residues include histidine 211, histidine 293, and glutamate 379.

It belongs to the 4HPPD family. Fe cation serves as cofactor.

It localises to the cytoplasm. It catalyses the reaction 3-(4-hydroxyphenyl)pyruvate + O2 = homogentisate + CO2. The protein operates within amino-acid degradation; L-phenylalanine degradation; acetoacetate and fumarate from L-phenylalanine: step 3/6. It participates in cofactor biosynthesis; prenylquinone biosynthesis. The protein is 4-hydroxyphenylpyruvate dioxygenase of Hordeum vulgare (Barley).